Here is a 390-residue protein sequence, read N- to C-terminus: Dual-specificity RNA methyltransferase RlmN (390 aa).

The active-site Proton acceptor is the Glu110. Residues 116 to 355 form the Radical SAM core domain; the sequence is EADRATLCVS…VIIRKTRGDD (240 aa). A disulfide bridge connects residues Cys123 and Cys360. The [4Fe-4S] cluster site is built by Cys130, Cys134, and Cys137. Residues 184-185, Ser216, 238-240, and Asn317 contribute to the S-adenosyl-L-methionine site; these read GE and SLH. Cys360 acts as the S-methylcysteine intermediate in catalysis.

The protein belongs to the radical SAM superfamily. RlmN family. The cofactor is [4Fe-4S] cluster.

The protein localises to the cytoplasm. It catalyses the reaction adenosine(2503) in 23S rRNA + 2 reduced [2Fe-2S]-[ferredoxin] + 2 S-adenosyl-L-methionine = 2-methyladenosine(2503) in 23S rRNA + 5'-deoxyadenosine + L-methionine + 2 oxidized [2Fe-2S]-[ferredoxin] + S-adenosyl-L-homocysteine. It carries out the reaction adenosine(37) in tRNA + 2 reduced [2Fe-2S]-[ferredoxin] + 2 S-adenosyl-L-methionine = 2-methyladenosine(37) in tRNA + 5'-deoxyadenosine + L-methionine + 2 oxidized [2Fe-2S]-[ferredoxin] + S-adenosyl-L-homocysteine. Functionally, specifically methylates position 2 of adenine 2503 in 23S rRNA and position 2 of adenine 37 in tRNAs. m2A2503 modification seems to play a crucial role in the proofreading step occurring at the peptidyl transferase center and thus would serve to optimize ribosomal fidelity. The chain is Dual-specificity RNA methyltransferase RlmN from Haemophilus influenzae (strain PittEE).